A 528-amino-acid chain; its full sequence is Ecdysteroid UDP-glucosyltransferase (528 aa).

A signal peptide spans 1–32 (MGHLHIVHWRLTMNGAIAALFLCLVMVHQQHA).

It belongs to the UDP-glycosyltransferase family.

In terms of biological role, catalyzes the transfer of glucose from UDP-glucose to ecdysteroids which are insect molting hormones. Expression of egt interferes with normal insect development and block molting. The chain is Ecdysteroid UDP-glucosyltransferase (EGT) from Mamestra brassicae nuclear polyhedrosis virus (MbNPV).